A 345-amino-acid polypeptide reads, in one-letter code: Phosphoribosylformylglycinamidine cyclo-ligase (345 aa).

The protein belongs to the AIR synthase family.

Its subcellular location is the cytoplasm. The enzyme catalyses 2-formamido-N(1)-(5-O-phospho-beta-D-ribosyl)acetamidine + ATP = 5-amino-1-(5-phospho-beta-D-ribosyl)imidazole + ADP + phosphate + H(+). The protein operates within purine metabolism; IMP biosynthesis via de novo pathway; 5-amino-1-(5-phospho-D-ribosyl)imidazole from N(2)-formyl-N(1)-(5-phospho-D-ribosyl)glycinamide: step 2/2. This is Phosphoribosylformylglycinamidine cyclo-ligase from Salmonella typhimurium (strain LT2 / SGSC1412 / ATCC 700720).